The primary structure comprises 337 residues: Protein RecA (337 aa).

An ATP-binding site is contributed by 66–73 (GPESSGKT).

The protein belongs to the RecA family.

It is found in the cytoplasm. Functionally, can catalyze the hydrolysis of ATP in the presence of single-stranded DNA, the ATP-dependent uptake of single-stranded DNA by duplex DNA, and the ATP-dependent hybridization of homologous single-stranded DNAs. It interacts with LexA causing its activation and leading to its autocatalytic cleavage. The sequence is that of Protein RecA from Mesomycoplasma hyopneumoniae (strain 232) (Mycoplasma hyopneumoniae).